We begin with the raw amino-acid sequence, 84 residues long: uncharacterized protein (84 aa).

This is an uncharacterized protein from Vaccinia virus (strain Copenhagen) (VACV).